The primary structure comprises 425 residues: Histone-binding protein RBBP4-A (425 aa).

Ala2 carries the post-translational modification N-acetylalanine. WD repeat units lie at residues 32–125, 126–175, 176–223, 225–270, 271–314, 315–371, and 372–404; these read YDLV…THDG, EVNR…RLRG, HQKE…KTIF, GHTA…HSVD, AHTA…HSFE, SHKD…FIHG, and GHTA…VWQM.

This sequence belongs to the WD repeat RBAP46/RBAP48/MSI1 family. Binds directly to histone H4, probably via helix 1 of the histone fold, a region that is not accessible when histone H4 is in chromatin. Probably forms a large corepressor complex that contains ncor1, sin3a, hdac1-A and/or hdac1-B, hdac2, rbbp4-A and/or rbbp4-B and possibly rbbp7.

It is found in the nucleus. It localises to the chromosome. The protein localises to the telomere. Its function is as follows. Core histone-binding subunit that may target chromatin assembly factors, chromatin remodeling factors and histone deacetylases to their histone substrates in a manner that is regulated by nucleosomal DNA. Component of several complexes which regulate chromatin metabolism. This chain is Histone-binding protein RBBP4-A (rbbp4-a), found in Xenopus laevis (African clawed frog).